A 168-amino-acid chain; its full sequence is Probable deoxyuridine 5'-triphosphate nucleotidohydrolase (168 aa).

Belongs to the dCTP deaminase family. Archaeal dUTPase subfamily.

It carries out the reaction dUTP + H2O = dUMP + diphosphate + H(+). Its pathway is pyrimidine metabolism; dUMP biosynthesis; dUMP from dCTP (dUTP route): step 2/2. Functionally, this enzyme is involved in nucleotide metabolism: it produces dUMP, the immediate precursor of thymidine nucleotides and it decreases the intracellular concentration of dUTP so that uracil cannot be incorporated into DNA. This is Probable deoxyuridine 5'-triphosphate nucleotidohydrolase from Archaeoglobus fulgidus (strain ATCC 49558 / DSM 4304 / JCM 9628 / NBRC 100126 / VC-16).